The following is an 88-amino-acid chain: Putative septation protein SpoVG (88 aa).

This sequence belongs to the SpoVG family.

Its function is as follows. Could be involved in septation. This is Putative septation protein SpoVG from Lachnospira eligens (strain ATCC 27750 / DSM 3376 / VPI C15-48 / C15-B4) (Eubacterium eligens).